We begin with the raw amino-acid sequence, 406 residues long: ATP-dependent RNA helicase eIF4A (406 aa).

A Q motif motif is present at residues 25–53 (DSFDAMDLKPELLRGVYAYGFERPSAIQQ). A Helicase ATP-binding domain is found at 56–226 (ILPIIKGNDV…TKFMRDPVRI (171 aa)). 69 to 76 (AQSGTGKT) serves as a coordination point for ATP. A DEAD box motif is present at residues 174–177 (DEAD). Positions 237-398 (GIKQFYIAVE…EMPMNVAGKF (162 aa)) constitute a Helicase C-terminal domain.

This sequence belongs to the DEAD box helicase family. eIF4A subfamily. As to quaternary structure, component of the eIF4F complex, which composition varies with external and internal environmental conditions. It is composed of at least eIF4A, eIF4E and eIF4G.

It localises to the cytoplasm. The catalysed reaction is ATP + H2O = ADP + phosphate + H(+). ATP-dependent RNA helicase which is a subunit of the eIF4F complex involved in cap recognition and is required for mRNA binding to ribosome. In the current model of translation initiation, eIF4A unwinds RNA secondary structures in the 5'-UTR of mRNAs which is necessary to allow efficient binding of the small ribosomal subunit, and subsequent scanning for the initiator codon. This chain is ATP-dependent RNA helicase eIF4A (tif1), found in Aspergillus fumigatus (strain ATCC MYA-4609 / CBS 101355 / FGSC A1100 / Af293) (Neosartorya fumigata).